The sequence spans 209 residues: Large ribosomal subunit protein uL3 (209 aa).

The interval 141–163 (RAVGSMGASSDPSRTFKNKRMPG) is disordered.

It belongs to the universal ribosomal protein uL3 family. In terms of assembly, part of the 50S ribosomal subunit. Forms a cluster with proteins L14 and L19.

In terms of biological role, one of the primary rRNA binding proteins, it binds directly near the 3'-end of the 23S rRNA, where it nucleates assembly of the 50S subunit. The chain is Large ribosomal subunit protein uL3 from Clostridium botulinum (strain Langeland / NCTC 10281 / Type F).